The following is a 421-amino-acid chain: Serine--tRNA ligase (421 aa).

230–232 is a binding site for L-serine; it reads TAE. 259–261 provides a ligand contact to ATP; that stretch reads RRE. E282 contributes to the L-serine binding site. Position 346 to 349 (346 to 349) interacts with ATP; that stretch reads EISS. An L-serine-binding site is contributed by S380.

Belongs to the class-II aminoacyl-tRNA synthetase family. Type-1 seryl-tRNA synthetase subfamily. In terms of assembly, homodimer. The tRNA molecule binds across the dimer.

Its subcellular location is the cytoplasm. The catalysed reaction is tRNA(Ser) + L-serine + ATP = L-seryl-tRNA(Ser) + AMP + diphosphate + H(+). It catalyses the reaction tRNA(Sec) + L-serine + ATP = L-seryl-tRNA(Sec) + AMP + diphosphate + H(+). The protein operates within aminoacyl-tRNA biosynthesis; selenocysteinyl-tRNA(Sec) biosynthesis; L-seryl-tRNA(Sec) from L-serine and tRNA(Sec): step 1/1. Catalyzes the attachment of serine to tRNA(Ser). Is also able to aminoacylate tRNA(Sec) with serine, to form the misacylated tRNA L-seryl-tRNA(Sec), which will be further converted into selenocysteinyl-tRNA(Sec). The chain is Serine--tRNA ligase from Methanosarcina acetivorans (strain ATCC 35395 / DSM 2834 / JCM 12185 / C2A).